A 597-amino-acid polypeptide reads, in one-letter code: Elongation factor 4 (597 aa).

Residues 2 to 184 (DHIRNFSIIA…SLIAKVPPPK (183 aa)) enclose the tr-type G domain. GTP is bound by residues 14-19 (DHGKST) and 131-134 (NKID).

It belongs to the TRAFAC class translation factor GTPase superfamily. Classic translation factor GTPase family. LepA subfamily.

The protein localises to the cell inner membrane. It carries out the reaction GTP + H2O = GDP + phosphate + H(+). Its function is as follows. Required for accurate and efficient protein synthesis under certain stress conditions. May act as a fidelity factor of the translation reaction, by catalyzing a one-codon backward translocation of tRNAs on improperly translocated ribosomes. Back-translocation proceeds from a post-translocation (POST) complex to a pre-translocation (PRE) complex, thus giving elongation factor G a second chance to translocate the tRNAs correctly. Binds to ribosomes in a GTP-dependent manner. The sequence is that of Elongation factor 4 from Burkholderia pseudomallei (strain 1710b).